Reading from the N-terminus, the 920-residue chain is Isoleucine--tRNA ligase (920 aa).

A 'HIGH' region motif is present at residues 58 to 68 (PYANGHLHLGH). E569 lines the L-isoleucyl-5'-AMP pocket. The 'KMSKS' region motif lies at 610 to 614 (KMSKS). K613 contacts ATP. Residues C895, C898, C910, and C913 each coordinate Zn(2+).

The protein belongs to the class-I aminoacyl-tRNA synthetase family. IleS type 1 subfamily. Monomer. Zn(2+) is required as a cofactor.

The protein resides in the cytoplasm. It catalyses the reaction tRNA(Ile) + L-isoleucine + ATP = L-isoleucyl-tRNA(Ile) + AMP + diphosphate. Its function is as follows. Catalyzes the attachment of isoleucine to tRNA(Ile). As IleRS can inadvertently accommodate and process structurally similar amino acids such as valine, to avoid such errors it has two additional distinct tRNA(Ile)-dependent editing activities. One activity is designated as 'pretransfer' editing and involves the hydrolysis of activated Val-AMP. The other activity is designated 'posttransfer' editing and involves deacylation of mischarged Val-tRNA(Ile). This chain is Isoleucine--tRNA ligase, found in Helicobacter pylori (strain G27).